A 178-amino-acid polypeptide reads, in one-letter code: Transcription antitermination protein NusB (178 aa).

It belongs to the NusB family.

Functionally, involved in transcription antitermination. Required for transcription of ribosomal RNA (rRNA) genes. Binds specifically to the boxA antiterminator sequence of the ribosomal RNA (rrn) operons. This chain is Transcription antitermination protein NusB, found in Alkalilimnicola ehrlichii (strain ATCC BAA-1101 / DSM 17681 / MLHE-1).